A 294-amino-acid chain; its full sequence is uncharacterized protein (294 aa).

The signal sequence occupies residues Met-1–Ala-18.

This is an uncharacterized protein from Rickettsia bellii (strain RML369-C).